Consider the following 246-residue polypeptide: tRNA pseudouridine synthase A (246 aa).

Aspartate 54 functions as the Nucleophile in the catalytic mechanism. Tyrosine 112 contacts substrate.

Belongs to the tRNA pseudouridine synthase TruA family. Homodimer.

It catalyses the reaction uridine(38/39/40) in tRNA = pseudouridine(38/39/40) in tRNA. In terms of biological role, formation of pseudouridine at positions 38, 39 and 40 in the anticodon stem and loop of transfer RNAs. The polypeptide is tRNA pseudouridine synthase A (Moorella thermoacetica (strain ATCC 39073 / JCM 9320)).